We begin with the raw amino-acid sequence, 1477 residues long: Oligomycin resistance ATP-dependent permease YOR1 (1477 aa).

Residues 1 to 48 (MTITVGDAVSETELENKSQNVVLSPKASASSDISTDVDKDTSSSWDDK) form a disordered region. The Cytoplasmic portion of the chain corresponds to 1-206 (MTITVGDAVS…RALLFTFKKQ (206 aa)). 2 positions are modified to phosphoserine: serine 10 and serine 24. Residues 36–48 (DVDKDTSSSWDDK) show a composition bias toward basic and acidic residues. At threonine 53 the chain carries Phosphothreonine. The Diacidic ER export motif DxE motif lies at 71–73 (DIE). Residues 207–227 (YFMSIVFAILANCTSGFNPMI) traverse the membrane as a helical segment. An ABC transmembrane type-1 1 domain is found at 207–493 (YFMSIVFAIL…LPIAIGTGID (287 aa)). The Extracellular portion of the chain corresponds to 228–249 (TKRLIEFVEEKAIFHSMHVNKG). Residues 250-270 (IGYAIGACLMMFVNGLTFNHF) traverse the membrane as a helical segment. Topologically, residues 271 to 328 (FHTSQLTGVQAKSILTKAAMKKMFNASNYARHCFPNGKVTSFVTTDLARIEFALSFQP) are cytoplasmic. Residues 329 to 349 (FLAGFPAILAICIVLLIVNLG) traverse the membrane as a helical segment. The Extracellular segment spans residues 350–357 (PIALVGIG). Residues 358–370 (IFFGGFFISLFAF) form a helical membrane-spanning segment. Over 371–433 (KLILGFRIAA…KVRKMQLSRN (63 aa)) the chain is Cytoplasmic. The chain crosses the membrane as a helical span at residues 434-454 (FLIAMAMSLPSIASLVTFLAM). At 455 to 478 (YKVNKGGRQPGNIFASLSLFQVLS) the chain is on the extracellular side. Residues 479 to 499 (LQMFFLPIAIGTGIDMIIGLG) traverse the membrane as a helical segment. At 500–615 (RLQSLLEAPE…DLNFDIKKGE (116 aa)) the chain is on the cytoplasmic side. The disordered stretch occupies residues 552 to 595 (KGEAKDEGKKNKKKRKDTWGKPSASTNKAKRLDNMLKDRDGPED). Over residues 581-595 (KRLDNMLKDRDGPED) the composition is skewed to basic and acidic residues. In terms of domain architecture, ABC transporter 1 spans 581 to 808 (KRLDNMLKDR…NQTLINLLQF (228 aa)). Residues 616-636 (FIMITGPIGTGKSSLLNAMAG) traverse the membrane as a helical segment. 621–628 (GPIGTGKS) contacts ATP. Residues 637-892 (SMRKTDGKVE…EYIKAAVGKW (256 aa)) are Extracellular-facing. Asparagine 661, asparagine 759, and asparagine 799 each carry an N-linked (GlcNAc...) asparagine glycan. Residues 893–913 (GFIALPLYAILVVGTTFCSLF) traverse the membrane as a helical segment. The ABC transmembrane type-1 2 domain occupies 897-1175 (LPLYAILVVG…ILRAMTQTEN (279 aa)). Residues 914–940 (SSVWLSYWTENKFKNRPPSFYMGLYSF) are Cytoplasmic-facing. Residues 941-961 (FVFAAFIFMNGQFTILCAMGI) form a helical membrane-spanning segment. The Extracellular segment spans residues 962 to 1027 (MASKWLNLRA…ANIVGVCVMC (66 aa)). Residues 1028 to 1048 (IVYLPWFAIAIPFLLVIFVLI) traverse the membrane as a helical segment. Residues 1049–1117 (ADHYQSSGRE…GYLVVVLQRW (69 aa)) are Cytoplasmic-facing. A helical transmembrane segment spans residues 1118-1138 (VGIFLDMVAIAFALIITLLCV). At 1139 to 1141 (TRA) the chain is on the extracellular side. Residues 1142–1162 (FPISAASVGVLLTYVLQLPGL) form a helical membrane-spanning segment. At 1163 to 1477 (LNTILRAMTQ…IVENDFENRS (315 aa)) the chain is on the cytoplasmic side. The ABC transporter 2 domain maps to 1213–1464 (IIFENVDFAY…EDSIFRSMCS (252 aa)). ATP is bound at residue 1247 to 1254 (GRTGAGKS).

It belongs to the ABC transporter superfamily. ABCC family. Conjugate transporter (TC 3.A.1.208) subfamily.

It localises to the cell membrane. The enzyme catalyses a 1,2-diacyl-sn-glycero-3-phosphoethanolamine(in) + ATP + H2O = a 1,2-diacyl-sn-glycero-3-phosphoethanolamine(out) + ADP + phosphate + H(+). The catalysed reaction is Cd(2+)(in) + ATP + H2O = Cd(2+)(out) + ADP + phosphate + H(+). It catalyses the reaction an S-substituted glutathione(in) + ATP + H2O = an S-substituted glutathione(out) + ADP + phosphate + H(+). Its function is as follows. Functions as a pleiotropic drug pump at the plasma membrane to clear toxic substances from the cytosol. Organic anion transporter involved in the detoxification of a wide range of toxic environmental organic anions that contain carboxyl groups. Required for tolerance to reveromycin A, tautomycin and leptomycin B. Required for oligomycin resistance. Required for rhodamine B resistance. Mediates the ATP-dependent efflux of rhodamine B. Involved in cadmium detoxification. Displays an energy-dependent efflux of cadmium and glutathione, suggesting that YOR1 transports both compounds as a bis-glutathionato-cadmium Cd-(GS)(2) complex. Confers resistance to rhodamine 6G and to doxorubicin. The chain is Oligomycin resistance ATP-dependent permease YOR1 from Saccharomyces cerevisiae (strain ATCC 204508 / S288c) (Baker's yeast).